A 231-amino-acid polypeptide reads, in one-letter code: Ribose-5-phosphate isomerase A (231 aa).

Substrate contacts are provided by residues 31–34 (TGST), 86–89 (DGAD), and 100–103 (KGLG). E109 functions as the Proton acceptor in the catalytic mechanism. K127 contacts substrate.

It belongs to the ribose 5-phosphate isomerase family. As to quaternary structure, homodimer.

The catalysed reaction is aldehydo-D-ribose 5-phosphate = D-ribulose 5-phosphate. The protein operates within carbohydrate degradation; pentose phosphate pathway; D-ribose 5-phosphate from D-ribulose 5-phosphate (non-oxidative stage): step 1/1. In terms of biological role, catalyzes the reversible conversion of ribose-5-phosphate to ribulose 5-phosphate. The protein is Ribose-5-phosphate isomerase A of Gluconobacter oxydans (strain 621H) (Gluconobacter suboxydans).